A 417-amino-acid chain; its full sequence is Serpin A9 (417 aa).

An N-terminal signal peptide occupies residues 1–23 (MASYLYGVLFAVGLCAPIYCVSP). N-linked (GlcNAc...) asparagine glycans are attached at residues Asn-101 and Asn-390.

This sequence belongs to the serpin family. In terms of tissue distribution, highly expressed in normal germinal center (GC) B-cells and GC B-cell-derived malignancies.

The protein resides in the secreted. Its subcellular location is the cytoplasm. It localises to the membrane. Its function is as follows. Protease inhibitor that inhibits trypsin and trypsin-like serine proteases (in vitro). Inhibits plasmin and thrombin with lower efficiency (in vitro). The sequence is that of Serpin A9 (SERPINA9) from Homo sapiens (Human).